Here is a 445-residue protein sequence, read N- to C-terminus: Tubulin beta-4B chain (445 aa).

The MREI motif motif lies at 1–4; it reads MREI. Position 11 (Gln-11) interacts with GTP. Thr-55 carries the post-translational modification Phosphothreonine. The residue at position 58 (Lys-58) is an N6-acetyllysine. GTP-binding residues include Glu-69, Ser-138, Gly-142, Thr-143, and Gly-144. Glu-69 provides a ligand contact to Mg(2+). Ser-172 carries the post-translational modification Phosphoserine; by CDK1. Asn-204 and Asn-226 together coordinate GTP. The tract at residues 426–445 is disordered; the sequence is QDATAEEEGEFEEEAEEEVA. Over residues 429 to 445 the composition is skewed to acidic residues; it reads TAEEEGEFEEEAEEEVA. Glu-438 is modified (5-glutamyl polyglutamate).

The protein belongs to the tubulin family. As to quaternary structure, dimer of alpha and beta chains. A typical microtubule is a hollow water-filled tube with an outer diameter of 25 nm and an inner diameter of 15 nM. Alpha-beta heterodimers associate head-to-tail to form protofilaments running lengthwise along the microtubule wall with the beta-tubulin subunit facing the microtubule plus end conferring a structural polarity. Microtubules usually have 13 protofilaments but different protofilament numbers can be found in some organisms and specialized cells. Component of sperm flagellar doublet microtubules. Mg(2+) serves as cofactor. Post-translationally, some glutamate residues at the C-terminus are polyglycylated, resulting in polyglycine chains on the gamma-carboxyl group. Glycylation is mainly limited to tubulin incorporated into axonemes (cilia and flagella) whereas glutamylation is prevalent in neuronal cells, centrioles, axonemes, and the mitotic spindle. Both modifications can coexist on the same protein on adjacent residues, and lowering polyglycylation levels increases polyglutamylation, and reciprocally. Cilia and flagella glycylation is required for their stability and maintenance. Flagella glycylation controls sperm motility. In terms of processing, some glutamate residues at the C-terminus are polyglutamylated, resulting in polyglutamate chains on the gamma-carboxyl group. Polyglutamylation plays a key role in microtubule severing by spastin (SPAST). SPAST preferentially recognizes and acts on microtubules decorated with short polyglutamate tails: severing activity by SPAST increases as the number of glutamates per tubulin rises from one to eight, but decreases beyond this glutamylation threshold. Glutamylation is also involved in cilia motility. Phosphorylated on Ser-172 by CDK1 during the cell cycle, from metaphase to telophase, but not in interphase. This phosphorylation inhibits tubulin incorporation into microtubules.

It localises to the cytoplasm. The protein localises to the cytoskeleton. It is found in the flagellum axoneme. Functionally, tubulin is the major constituent of microtubules, a cylinder consisting of laterally associated linear protofilaments composed of alpha- and beta-tubulin heterodimers. Microtubules grow by the addition of GTP-tubulin dimers to the microtubule end, where a stabilizing cap forms. Below the cap, tubulin dimers are in GDP-bound state, owing to GTPase activity of alpha-tubulin. This Rattus norvegicus (Rat) protein is Tubulin beta-4B chain (Tubb4b).